The chain runs to 76 residues: Membrane protein UL43 homolog (76 aa).

Helical transmembrane passes span 7–27 and 54–74; these read AVCVVLAAFGYWVAAPISLAF and ISRWLIVSVYVAAGLCYATII.

It belongs to the alphaherpesvirinae HHV-1 UL43 family.

It is found in the membrane. This chain is Membrane protein UL43 homolog, found in Equus caballus (Horse).